We begin with the raw amino-acid sequence, 334 residues long: L-lactate dehydrogenase B chain (334 aa).

Residues 30–58 and Arg-100 contribute to the NAD(+) site; that span reads GQVGMACAVSILLRELTDEIALVDVLEDK. Substrate-binding residues include Arg-107, Asn-139, and Arg-170. Residue Asn-139 coordinates NAD(+). His-194 (proton acceptor) is an active-site residue. Thr-249 contacts substrate.

It belongs to the LDH/MDH superfamily. LDH family. As to quaternary structure, homotetramer.

It localises to the cytoplasm. It catalyses the reaction (S)-lactate + NAD(+) = pyruvate + NADH + H(+). It participates in fermentation; pyruvate fermentation to lactate; (S)-lactate from pyruvate: step 1/1. Functionally, interconverts simultaneously and stereospecifically pyruvate and lactate with concomitant interconversion of NADH and NAD(+). This Squalus acanthias (Spiny dogfish) protein is L-lactate dehydrogenase B chain (ldhb).